A 907-amino-acid polypeptide reads, in one-letter code: Valine--tRNA ligase (907 aa).

The 'HIGH' region motif lies at 45–55; the sequence is PNVTGSLHMGH. The short motif at 554–558 is the 'KMSKS' region element; sequence KMSKS. Residue K557 coordinates ATP. Positions 838–870 form a coiled coil; that stretch reads GQLIDLEAERARLVKNVSKIEQDIEKISVKLNN.

Belongs to the class-I aminoacyl-tRNA synthetase family. ValS type 1 subfamily. Monomer.

Its subcellular location is the cytoplasm. It catalyses the reaction tRNA(Val) + L-valine + ATP = L-valyl-tRNA(Val) + AMP + diphosphate. In terms of biological role, catalyzes the attachment of valine to tRNA(Val). As ValRS can inadvertently accommodate and process structurally similar amino acids such as threonine, to avoid such errors, it has a 'posttransfer' editing activity that hydrolyzes mischarged Thr-tRNA(Val) in a tRNA-dependent manner. In Bartonella quintana (strain Toulouse) (Rochalimaea quintana), this protein is Valine--tRNA ligase.